The following is a 572-amino-acid chain: Proline--tRNA ligase (572 aa).

This sequence belongs to the class-II aminoacyl-tRNA synthetase family. ProS type 1 subfamily. In terms of assembly, homodimer.

Its subcellular location is the cytoplasm. The catalysed reaction is tRNA(Pro) + L-proline + ATP = L-prolyl-tRNA(Pro) + AMP + diphosphate. In terms of biological role, catalyzes the attachment of proline to tRNA(Pro) in a two-step reaction: proline is first activated by ATP to form Pro-AMP and then transferred to the acceptor end of tRNA(Pro). As ProRS can inadvertently accommodate and process non-cognate amino acids such as alanine and cysteine, to avoid such errors it has two additional distinct editing activities against alanine. One activity is designated as 'pretransfer' editing and involves the tRNA(Pro)-independent hydrolysis of activated Ala-AMP. The other activity is designated 'posttransfer' editing and involves deacylation of mischarged Ala-tRNA(Pro). The misacylated Cys-tRNA(Pro) is not edited by ProRS. This Haemophilus influenzae (strain PittEE) protein is Proline--tRNA ligase.